We begin with the raw amino-acid sequence, 190 residues long: NAD(P)H-quinone oxidoreductase subunit I (190 aa).

2 4Fe-4S ferredoxin-type domains span residues 55–84 and 95–124; these read GRIH…VDWT and KHYS…MTEE. The [4Fe-4S] cluster site is built by Cys64, Cys67, Cys70, Cys74, Cys104, Cys107, Cys110, and Cys114. The disordered stretch occupies residues 169–190; it reads IEPHDLPAGSQRAGKRPEEITD.

This sequence belongs to the complex I 23 kDa subunit family. NDH-1 is composed of at least 11 different subunits. [4Fe-4S] cluster serves as cofactor.

Its subcellular location is the cellular thylakoid membrane. The enzyme catalyses a plastoquinone + NADH + (n+1) H(+)(in) = a plastoquinol + NAD(+) + n H(+)(out). It catalyses the reaction a plastoquinone + NADPH + (n+1) H(+)(in) = a plastoquinol + NADP(+) + n H(+)(out). NDH-1 shuttles electrons from an unknown electron donor, via FMN and iron-sulfur (Fe-S) centers, to quinones in the respiratory and/or the photosynthetic chain. The immediate electron acceptor for the enzyme in this species is believed to be plastoquinone. Couples the redox reaction to proton translocation, and thus conserves the redox energy in a proton gradient. The chain is NAD(P)H-quinone oxidoreductase subunit I from Microcystis aeruginosa (strain NIES-843 / IAM M-2473).